A 976-amino-acid chain; its full sequence is 3-O-beta-L-arabinopyranosyl-alpha-L-arabinofuranosidase (976 aa).

An N-terminal signal peptide occupies residues 1–28; the sequence is MSHRNKALVAIVAGTALLISSGAAIGQA. Glu-190 serves as the catalytic Proton donor. The Nucleophile role is filled by Glu-315. In terms of domain architecture, CBM6 spans 519-654; that stretch reads LLVEEVENTV…DNTLDKFLLY (136 aa).

The protein belongs to the glycosyl hydrolase 39 family.

It is found in the secreted. It catalyses the reaction Hydrolysis of beta-L-Arap-(1-&gt;3)-L-Araf disaccharides from non-reducing terminals in branches of type II arabinogalactan attached to proteins.. Hydrolase involved in the degradation of the gum arabic arabinogalactan protein (AGP) and larch AGP. Catalyzes the release of 3-O-beta-L-arabinopyranosyl-L-arabinose (beta-L-Arap-(1-&gt;3)-L-Ara) from gum arabic AGP and larch AGP. Also cleaves a small amount of beta-L-Arap-(1-&gt;3)-L-Ara from sugar beet arabinan, but wheat AGP cannot be used as a substrate. Can also release 3-O-alpha-D-galactopyranosyl-L-arabinose (alpha-D-Galp-(1-&gt;3)-L-Ara) from gum arabic AGP, with low efficiency. The polypeptide is 3-O-beta-L-arabinopyranosyl-alpha-L-arabinofuranosidase (Bifidobacterium pseudocatenulatum).